Reading from the N-terminus, the 443-residue chain is UDP-N-acetylmuramoylalanine--D-glutamate ligase (443 aa).

116–122 (GTNGKST) serves as a coordination point for ATP.

The protein belongs to the MurCDEF family.

Its subcellular location is the cytoplasm. The catalysed reaction is UDP-N-acetyl-alpha-D-muramoyl-L-alanine + D-glutamate + ATP = UDP-N-acetyl-alpha-D-muramoyl-L-alanyl-D-glutamate + ADP + phosphate + H(+). It functions in the pathway cell wall biogenesis; peptidoglycan biosynthesis. In terms of biological role, cell wall formation. Catalyzes the addition of glutamate to the nucleotide precursor UDP-N-acetylmuramoyl-L-alanine (UMA). The chain is UDP-N-acetylmuramoylalanine--D-glutamate ligase from Novosphingobium aromaticivorans (strain ATCC 700278 / DSM 12444 / CCUG 56034 / CIP 105152 / NBRC 16084 / F199).